Reading from the N-terminus, the 63-residue chain is UPF0434 protein Mmar10_2939 (63 aa).

It belongs to the UPF0434 family.

The protein is UPF0434 protein Mmar10_2939 of Maricaulis maris (strain MCS10) (Caulobacter maris).